The sequence spans 593 residues: MILLENGVRVFPKPGMGKDIYIGLANFGFENDVPELLGVAHLLEHILISFDYTRFVANASTARTYMSFWCRALRAEDYLAALETAVSWFFARGALRTDFSRVRIRNYVRELENEYYFRNEVFHCMDILTFLGGGDLYNGGRLSMLEQLDAVRELLGKRMRRLAGPNVVIFVRELSPAALALLERSFGTLPRFPSTIPATRLGSIHNKAVLVPAPFYALLIQVDNTVENVLAVICLAESYHFVDYETLGERLYVSFAFVHEQDCEAFLRNVGELRFEPAPRVELNYSDDYVMNLYVNFPWLQHDLADYLYTLNADCVPLLRGLEENLRRSVRERQLVVVYPSFSPSLFNSRDRQDHRLLVLDVDLARSAGPARVPRTFRRQPRAEVFVRYGDPALLDYVAFALARPRAAALRRLPRGVRLAHGFSHADMHEIMASETFIKYSRSRPAALFQYIFLAFFATGRSIAEILERREALVSFDARRCVNRLVFAKRARYDVVTKSSFVCGVLRGPRLSEAALTRAMWELKRKGLLYSLEHTRMHAKHTFYVFAFSIYPEQVYRYFARWQLVSKHCCVVSMRGEREDYSALRKEVVVNFV.

Position 41 (H41) interacts with Zn(2+). The active site involves E44. Residue H45 participates in Zn(2+) binding.

It belongs to the peptidase M44 family. Requires Zn(2+) as cofactor.

Its function is as follows. Seems to be involved in viral proteins maturation by cleavage at Ala-Gly-|-Xaa motifs. The protein is Probable metalloendopeptidase G1-type of Homo sapiens (Human).